The chain runs to 213 residues: BREX protein BrxA (213 aa).

Belongs to the BrxA family.

Its function is as follows. BREX systems (bacteriophage exclusion) provide immunity against bacteriophage. A probably non-essential part of a type 1 BREX system which protects against dsDNA phage. This system allows phage adsorption but prevents phage DNA replication, without degradation of the phage DNA. Methylation of bacterial DNA by PglX guides self/non-self discrimination. When the brxA-brxB-brxC-pglX-pglZ-brxL genes are transformed into a susceptible E.coli strain (BW25113) they confer very high resistance to infection by bacteriophage VR7 and VpaE1, about 100-fold protection against lambda, T5 and T7 and no protection against RNA phage Qbeta, ssDNA phage M13 or dSDNA phage T4 and VR5. Glycosylated phage DNA is not susceptible to BREX. The BREX system does not confer resistance to lysogenic lambda phage, i.e. prophage that are integrated into the chromosomal DNA and then induced to form phage. This is BREX protein BrxA from Escherichia coli O9:H4 (strain HS).